The chain runs to 159 residues: MEFNLVTIGFTIVNFIILMLILKHFFFDKVNKVIDDRNNEVALTIKKADAQNEEARLLKVESEKNLEDSKLQGKTIVENYKVKAEKVSEEITAEAKTEAQNILERAKRETQREKEKAEDEIKNQVVELAVLISSKALENSINEAEHRKLIEDFVSKVGI.

A helical membrane pass occupies residues 2 to 22 (EFNLVTIGFTIVNFIILMLIL).

Belongs to the ATPase B chain family. In terms of assembly, F-type ATPases have 2 components, F(1) - the catalytic core - and F(0) - the membrane proton channel. F(1) has five subunits: alpha(3), beta(3), gamma(1), delta(1), epsilon(1). F(0) has three main subunits: a(1), b(2) and c(10-14). The alpha and beta chains form an alternating ring which encloses part of the gamma chain. F(1) is attached to F(0) by a central stalk formed by the gamma and epsilon chains, while a peripheral stalk is formed by the delta and b chains.

The protein resides in the cell membrane. Its function is as follows. F(1)F(0) ATP synthase produces ATP from ADP in the presence of a proton or sodium gradient. F-type ATPases consist of two structural domains, F(1) containing the extramembraneous catalytic core and F(0) containing the membrane proton channel, linked together by a central stalk and a peripheral stalk. During catalysis, ATP synthesis in the catalytic domain of F(1) is coupled via a rotary mechanism of the central stalk subunits to proton translocation. Functionally, component of the F(0) channel, it forms part of the peripheral stalk, linking F(1) to F(0). The sequence is that of ATP synthase subunit b from Clostridium acetobutylicum (strain ATCC 824 / DSM 792 / JCM 1419 / IAM 19013 / LMG 5710 / NBRC 13948 / NRRL B-527 / VKM B-1787 / 2291 / W).